The primary structure comprises 309 residues: Taste receptor type 2 member 31 (309 aa).

At 1–2 (MI) the chain is on the extracellular side. The chain crosses the membrane as a helical span at residues 3–23 (TFLPIIFSILVVVTFVIGNFA). Residues 24–55 (NGFIALVNSTEWVKRQKISFADQILTALAVSR) are Cytoplasmic-facing. Residues 56–76 (VGLLWVLLLNWYATVLNPAFY) form a helical membrane-spanning segment. The Extracellular segment spans residues 77–100 (SVEVRTTTYNVWAVTNHFSNWLAT). Residues 101–121 (SLSIFYLLKIANFSNLIFLHL) traverse the membrane as a helical segment. The Cytoplasmic segment spans residues 122-126 (KRRVK). Residues 127-147 (NVILVMLLGPLLILACHLFMV) traverse the membrane as a helical segment. Over 148 to 181 (NMNEIVRTKEYEENMTWKYILRNAIYHPGMTVTT) the chain is Extracellular. The N-linked (GlcNAc...) asparagine glycan is linked to N161. Residues 182-202 (LQNLVPFTLTLISFLLLICSL) form a helical membrane-spanning segment. Residues 203–229 (CKHLKKMQLHGKGPQDPSTKVHIKALQ) are Cytoplasmic-facing. The helical transmembrane segment at 230-250 (IVISFLLLCVIYFVSVIISIW) threads the bilayer. At 251-259 (SFESLGNKP) the chain is on the extracellular side. Residues 260–280 (VFMFCQAIRFSYPSAHPFIVI) form a helical membrane-spanning segment. The Cytoplasmic portion of the chain corresponds to 281 to 309 (WGNKKLKQTFLSVLWNVRYWVKGQKPSSL).

This sequence belongs to the G-protein coupled receptor T2R family.

The protein localises to the membrane. Its function is as follows. Receptor that may play a role in the perception of bitterness and is gustducin-linked. May play a role in sensing the chemical composition of the gastrointestinal content. The activity of this receptor may stimulate alpha gustducin, mediate PLC-beta-2 activation and lead to the gating of TRPM5. The polypeptide is Taste receptor type 2 member 31 (TAS2R31) (Papio hamadryas (Hamadryas baboon)).